The primary structure comprises 2864 residues: Genome polyprotein (2864 aa).

Composition is skewed to polar residues over residues 1–10 and 21–32; these read MPVISTQTSP and QTQASYPVSIKT. The interval 1–49 is disordered; that stretch reads MPVISTQTSPVPAPRTRKNKQTQASYPVSIKTSVERGQRAKRKVQRDAR. The helical transmembrane segment at 133–153 threads the bilayer; it reads WATGWFGVHLFVVCLLSLACP. Residues N165, N212, and N264 are each glycosylated (N-linked (GlcNAc...) asparagine; by host). The chain crosses the membrane as a helical span at residues 324-344; sequence LIYYASRGKWYQLLLALMLYI. N380, N400, N422, N446, N467, and N512 each carry an N-linked (GlcNAc...) asparagine; by host glycan. 5 helical membrane-spanning segments follow: residues 582 to 602, 628 to 648, 660 to 680, 706 to 726, and 737 to 757; these read AVVLILLGLCGSKYLILAYLC, AGWDVLSKAQVAPFALIFFIC, LLGFVPMAAGLPLTFFVAAAA, PRIALLVGPWPLVALLTLLHL, and IIGGLTIPPVVALVVMSRFGF. A glycan (N-linked (GlcNAc...) asparagine; by host) is linked at N782. A run of 2 helical transmembrane segments spans residues 790-810 and 847-867; these read FLLVLVCFPGATYDTLVTFCV and WYSHYVLKFFLLVFGENGVFF. Residues 819–940 enclose the Peptidase C18 domain; sequence TSSAASFFGT…AMPPDGWAIT (122 aa). Catalysis depends on for protease NS2 activity; shared with dimeric partner residues H870, E888, and C909. The 182-residue stretch at 941–1122 folds into the Peptidase S29 domain; the sequence is APFTLQCLSE…VCAGYHPQYT (182 aa). Residues H997 and D1021 each act as charge relay system; for serine protease NS3 activity in the active site. C1037 and C1039 together coordinate Zn(2+). N-linked (GlcNAc...) asparagine; by host glycosylation occurs at N1057. S1079 serves as the catalytic Charge relay system; for serine protease NS3 activity. 2 residues coordinate Zn(2+): C1085 and H1089. Residues 1131–1281 enclose the Helicase ATP-binding domain; it reads PTVPNEYSVQ…ANITEIQLTD (151 aa). 1144–1151 is a binding site for ATP; sequence APTGSGKS. S1151 and E1229 together coordinate Mg(2+). The DECH box signature appears at 1228 to 1231; the sequence is DECH. The N-linked (GlcNAc...) asparagine; by host glycan is linked to N1273. Residues 1284–1449 form the Helicase C-terminal domain; sequence TIPFHGKKIK…GLSSTEAQTI (166 aa). N-linked (GlcNAc...) asparagine; by host glycosylation is present at N1559. 5 consecutive transmembrane segments (helical) span residues 1565-1585, 1653-1673, 1678-1698, 1722-1742, and 1783-1803; these read ALAVGVGVAMAYLAIDTFGAT, FLGPHAATILAIIEYCCGLVT, PFASCVFAFIAGITTPLPHKI, FMMAGAAGTALGTWTSVGFVF, and AAGVVGVLSACAMFALTTAGP. A lipid anchor (S-palmitoyl cysteine; by host) is attached at C1863. The helical transmembrane segment at 1864 to 1884 threads the bilayer; the sequence is GLIAWGLEIWQYVCNFFVICF. 4 residues coordinate Zn(2+): C1905, C1923, C1925, and C1947. 2 disordered regions span residues 2139–2178 and 2209–2266; these read TGSLTLPPPPRSVPGVSCPESLQRSDPLEGPSNLPSSPPV and GPDD…TKKK. A compositionally biased stretch (polar residues) spans 2226–2240; that stretch reads SDGSWSTTTTASSYV. The RdRp catalytic domain occupies 2485–2603; that stretch reads AVGATCDTVC…IWKSAGADAD (119 aa). Residues D2491, D2589, and D2590 each coordinate Mg(2+). N-linked (GlcNAc...) asparagine; by host glycans are attached at residues N2640 and N2722. A helical membrane pass occupies residues 2844-2864; that stretch reads VKYLAVIVFALGLIAVGLAIS.

Homooligomer. Interacts with E1 (via C-terminus). Interacts with the non-structural protein 5A. Part of the viral assembly initiation complex composed of NS2, E1, E2, NS3, NS4A, NS5A and the core protein. In terms of assembly, forms a heterodimer with envelope glycoprotein E2. Interacts with the core protein. Interacts with protease NS2. Part of the viral assembly initiation complex composed of NS2, E1, E2, NS3, NS4A, NS5A and the core protein. As to quaternary structure, forms a heterodimer with envelope glycoprotein E1. Part of the viral assembly initiation complex composed of NS2, E1, E2, NS3, NS4A, NS5A and the core protein. Homodimer. Interacts with envelope glycoprotein E1. Interacts with envelope glycoprotein E2. Interacts with viroporin p7. Interacts with serine protease/helicase NS3. Part of the replication complex composed of NS2, NS3, NS4A, NS4B, NS5A and the RNA-directed RNA polymerase embedded in an ER-derived membranous web. Part of the viral assembly initiation complex composed of NS2, E1, E2, NS3, NS4A, NS5A and the core protein. In terms of assembly, interacts with protease NS2. Interacts with non-structural protein 4A; this interaction stabilizes the folding of NS3 serine protease. NS3-NS4A interaction is essential for NS3 activation and allows membrane anchorage of the latter. Interacts with host MAVS; this interaction leads to the cleavage and inhibition of host MAVS. Part of the replication complex composed of NS2, NS3, NS4A, NS4B, NS5A and the RNA-directed RNA polymerase embedded in an ER-derived membranous web. Part of the viral assembly initiation complex composed of NS2, E1, E2, NS3, NS4A, NS5A and the core protein. As to quaternary structure, interacts with NS3 serine protease; this interaction stabilizes the folding of NS3 serine protease. NS3-NS4A interaction is essential for NS3 activation and allows membrane anchorage of the latter. Interacts with non-structural protein 5A (via N-terminus). Part of the replication complex composed of NS2, NS3, NS4A, NS4B, NS5A and the RNA-directed RNA polymerase embedded in an ER-derived membranous web. Part of the viral assembly initiation complex composed of NS2, E1, E2, NS3, NS4A, NS5A and the core protein. Monomer. Homodimer; dimerization is required for RNA-binding. Interacts with the core protein. Interacts (via N-terminus) with non-structural protein 4A. Interacts with non-structural protein 4B. Interacts with RNA-directed RNA polymerase. Part of the viral assembly initiation complex composed of NS2, E1, E2, NS3, NS4A, NS5A and the core protein. Part of the replication complex composed of NS2, NS3, NS4A, NS4B, NS5A and the RNA-directed RNA polymerase. The cofactor is Zn(2+). Mg(2+) is required as a cofactor. It depends on Mn(2+) as a cofactor. Post-translationally, specific enzymatic cleavages in vivo yield mature proteins. The structural proteins, core, E1, E2 and p7 are produced by proteolytic processing by host signal peptidases. The other proteins (p7, NS2, NS3, NS4A, NS4B, NS5A and NS5B) are cleaved by the viral proteases. Autoprocessing between NS2 and NS3 is mediated by the NS2 cysteine protease catalytic domain and regulated by the NS3 N-terminal domain. P13 may be further cleaved into p6 and p7 if the internal cleavage site is used. Highly N-glycosylated. In terms of processing, palmitoylated. This modification may play a role in its polymerization or in protein-protein interactions.

It is found in the virion. The protein localises to the host cytoplasm. The protein resides in the host lipid droplet. Its subcellular location is the virion membrane. It localises to the host endoplasmic reticulum membrane. It is found in the host perinuclear region. The protein localises to the host mitochondrion. The protein resides in the host nucleus. The enzyme catalyses Hydrolysis of four peptide bonds in the viral precursor polyprotein, commonly with Asp or Glu in the P6 position, Cys or Thr in P1 and Ser or Ala in P1'.. It carries out the reaction a ribonucleoside 5'-triphosphate + H2O = a ribonucleoside 5'-diphosphate + phosphate + H(+). It catalyses the reaction ATP + H2O = ADP + phosphate + H(+). The catalysed reaction is RNA(n) + a ribonucleoside 5'-triphosphate = RNA(n+1) + diphosphate. In terms of biological role, packages viral RNA to form a viral nucleocapsid, and promotes virion budding. Participates in the viral particle production as a result of its interaction with the non-structural protein 5A. Binds RNA and may function as a RNA chaperone to induce the RNA structural rearrangements taking place during virus replication. Modulates viral translation initiation by interacting with viral IRES and 40S ribosomal subunit. Probably affects various cell signaling pathways, host immunity and lipid metabolism. Its function is as follows. Forms a heterodimer with envelope glycoprotein E2, which mediates virus attachment to the host cell, virion internalization through clathrin-dependent endocytosis and fusion with host membrane. Fusion with the host cell is most likely mediated by both E1 and E2, through conformational rearrangements of the heterodimer required for fusion rather than a classical class II fusion mechanism. Forms a heterodimer with envelope glycoprotein E1, which mediates virus attachment to the host cell, virion internalization through clathrin-dependent endocytosis and fusion with host membrane. Fusion with the host cell is most likely mediated by both E1 and E2, through conformational rearrangements of the heterodimer required for fusion rather than a classical class II fusion mechanism. Functionally, may function as a multimeric ion channel protein (viroporin). In terms of biological role, cysteine protease required for the proteolytic auto-cleavage between the non-structural proteins NS2 and NS3. The N-terminus of NS3 is required for the function of NS2 protease (active region NS2-3). Promotes the initiation of viral particle assembly by mediating the interaction between structural and non-structural proteins. Its function is as follows. Displays three enzymatic activities: serine protease with a chymotrypsin-like fold, NTPase and RNA helicase. NS3 serine protease, in association with NS4A, is responsible for the cleavages of NS3-NS4A, NS4A-NS4B, NS4B-NS5A and NS5A-NS5B. The NS3/NS4A complex prevents phosphorylation of host IRF3, thus preventing the establishment of dsRNA induced antiviral state. NS3 RNA helicase binds to RNA and unwinds both dsDNA and dsRNA in the 3' to 5' direction, and likely resolves RNA complicated stable secondary structures in the template strand. Cleaves host MAVS/CARDIF thereby preventing the establishment of an antiviral state. Induces a specific membrane alteration that serves as a scaffold for the virus replication complex. This membrane alteration gives rise to the so-called ER-derived membranous web that contains the replication complex. NS4B self-interaction contributes to its function in membranous web formation. Functionally, phosphorylated protein that is indispensable for viral replication and assembly. In terms of biological role, RNA-dependent RNA polymerase that performs primer-template recognition and RNA synthesis during viral replication. Initiates RNA transcription/replication at a flavin adenine dinucleotide (FAD), resulting in a 5'- FAD cap on viral RNAs. In this way, recognition of viral 5' RNA by host pattern recognition receptors can be bypassed, thereby evading activation of antiviral pathways. This is Genome polyprotein from Hepatitis GB virus B (GBV-B).